The sequence spans 254 residues: MSLRLGVNIDHVATIRNARGASYPEPVRAAELALIAGADGITAHLREDRRHISDADIAVLTDLCHKRGKPLNFEMAVTDEMVGIALNARPHAACLVPERREEVTTEGGLDVIKGQKRIADATARLRTVGARVSLFIEPDPDQIRACVTAGAQVVELHTGAYCDAARAGETARAEAILKRLKAGAALAHELGLEVHAGHGIDYATVKPVAAIPQIAELNIGHFLIGEAIFVGLPEAIHRMRALMEAARVELEVLA.

Asn-8 is a binding site for 3-amino-2-oxopropyl phosphate. Residue 10-11 (DH) participates in 1-deoxy-D-xylulose 5-phosphate binding. Arg-19 is a 3-amino-2-oxopropyl phosphate binding site. The active-site Proton acceptor is the His-44. 1-deoxy-D-xylulose 5-phosphate is bound by residues Arg-46 and His-51. Glu-74 (proton acceptor) is an active-site residue. Thr-104 provides a ligand contact to 1-deoxy-D-xylulose 5-phosphate. Residue His-198 is the Proton donor of the active site. Residues Gly-199 and 220–221 (GH) each bind 3-amino-2-oxopropyl phosphate.

The protein belongs to the PNP synthase family. Homooctamer; tetramer of dimers.

The protein localises to the cytoplasm. The catalysed reaction is 3-amino-2-oxopropyl phosphate + 1-deoxy-D-xylulose 5-phosphate = pyridoxine 5'-phosphate + phosphate + 2 H2O + H(+). It participates in cofactor biosynthesis; pyridoxine 5'-phosphate biosynthesis; pyridoxine 5'-phosphate from D-erythrose 4-phosphate: step 5/5. In terms of biological role, catalyzes the complicated ring closure reaction between the two acyclic compounds 1-deoxy-D-xylulose-5-phosphate (DXP) and 3-amino-2-oxopropyl phosphate (1-amino-acetone-3-phosphate or AAP) to form pyridoxine 5'-phosphate (PNP) and inorganic phosphate. The protein is Pyridoxine 5'-phosphate synthase of Caulobacter vibrioides (strain ATCC 19089 / CIP 103742 / CB 15) (Caulobacter crescentus).